The chain runs to 323 residues: Transaldolase (323 aa).

Lysine 131 serves as the catalytic Schiff-base intermediate with substrate.

The protein belongs to the transaldolase family. Type 1 subfamily. As to quaternary structure, homodimer.

It localises to the cytoplasm. It catalyses the reaction D-sedoheptulose 7-phosphate + D-glyceraldehyde 3-phosphate = D-erythrose 4-phosphate + beta-D-fructose 6-phosphate. It participates in carbohydrate degradation; pentose phosphate pathway; D-glyceraldehyde 3-phosphate and beta-D-fructose 6-phosphate from D-ribose 5-phosphate and D-xylulose 5-phosphate (non-oxidative stage): step 2/3. Functionally, transaldolase is important for the balance of metabolites in the pentose-phosphate pathway. This Blochmanniella floridana protein is Transaldolase.